The sequence spans 240 residues: Flagellar L-ring protein (240 aa).

A signal peptide spans 1–20 (MIRNFLLFFMPIYAILFLSG). The N-palmitoyl cysteine moiety is linked to residue C21. A lipid anchor (S-diacylglycerol cysteine) is attached at C21.

It belongs to the FlgH family. As to quaternary structure, the basal body constitutes a major portion of the flagellar organelle and consists of four rings (L,P,S, and M) mounted on a central rod.

It is found in the cell outer membrane. The protein resides in the bacterial flagellum basal body. In terms of biological role, assembles around the rod to form the L-ring and probably protects the motor/basal body from shearing forces during rotation. In Sulfurimonas denitrificans (strain ATCC 33889 / DSM 1251) (Thiomicrospira denitrificans (strain ATCC 33889 / DSM 1251)), this protein is Flagellar L-ring protein.